The sequence spans 282 residues: NADPH-dependent 7-cyano-7-deazaguanine reductase (282 aa).

88–90 lines the substrate pocket; that stretch reads IES. 90 to 91 serves as a coordination point for NADPH; sequence SK. The active-site Thioimide intermediate is the cysteine 190. The active-site Proton donor is aspartate 197. 229-230 serves as a coordination point for substrate; the sequence is HE. NADPH is bound at residue 258 to 259; it reads RG.

It belongs to the GTP cyclohydrolase I family. QueF type 2 subfamily. As to quaternary structure, homodimer.

Its subcellular location is the cytoplasm. It carries out the reaction 7-aminomethyl-7-carbaguanine + 2 NADP(+) = 7-cyano-7-deazaguanine + 2 NADPH + 3 H(+). Its pathway is tRNA modification; tRNA-queuosine biosynthesis. Catalyzes the NADPH-dependent reduction of 7-cyano-7-deazaguanine (preQ0) to 7-aminomethyl-7-deazaguanine (preQ1). The polypeptide is NADPH-dependent 7-cyano-7-deazaguanine reductase (Salmonella paratyphi B (strain ATCC BAA-1250 / SPB7)).